A 503-amino-acid chain; its full sequence is MAKLIMVQGTSSNVGKSILVTALCRIFKQDGYKVAPYKSQNMALNAFVTKEGGEIGRAQAVQAEACGIEPSVDMNPILLKPEADSRSQIIVNGKVDRTISAREYYEYAPLLLDTALAALNRLREKNDIVVIEGAGSPAEINLKQREIVNMRIAKEASAPVLLAGDIDRGGVFASLIGTIDLLEPDERYYIKGYLINKFRGDASLLKPAIDVLEDRTSIPVLGIIPYLRNMAIAQEDSVYLDECKGSLGETDLDIAVIRLPRISNYDDFDALATDGASVRFVSKTAEIGNPDLIIIPGTKSTIPDMEYLEQSGLAETIIKKARKGTHVLGVCGGYQILGKMIYDPHKTESETTELKGLGLLDTETTFEKEKATTQISGQVKFDSGLLSGLAGCAVSGYEIHMGRTRLFSAQPAFHITKTPKGPADYLDGASNAEGTVLGTYIHGIFENAAFRRGFLNAIRRHKGIPERQADYFDRDKEYDKLADIVRASIDMEKIYAILNEGIR.

One can recognise a GATase cobBQ-type domain in the interval 251–450 (DLDIAVIRLP…IHGIFENAAF (200 aa)). Residue C331 is the Nucleophile of the active site. H442 is an active-site residue.

It belongs to the CobB/CobQ family. CobQ subfamily.

It participates in cofactor biosynthesis; adenosylcobalamin biosynthesis. In terms of biological role, catalyzes amidations at positions B, D, E, and G on adenosylcobyrinic A,C-diamide. NH(2) groups are provided by glutamine, and one molecule of ATP is hydrogenolyzed for each amidation. The chain is Cobyric acid synthase from Dehalococcoides mccartyi (strain CBDB1).